A 195-amino-acid polypeptide reads, in one-letter code: Molybdenum cofactor guanylyltransferase (195 aa).

Residues 12-14, Lys25, Asn53, Asp70, and Asp100 each bind GTP; that span reads LAG. Residue Asp100 coordinates Mg(2+).

The protein belongs to the MobA family. In terms of assembly, monomer. Mg(2+) serves as cofactor.

Its subcellular location is the cytoplasm. The enzyme catalyses Mo-molybdopterin + GTP + H(+) = Mo-molybdopterin guanine dinucleotide + diphosphate. Functionally, transfers a GMP moiety from GTP to Mo-molybdopterin (Mo-MPT) cofactor (Moco or molybdenum cofactor) to form Mo-molybdopterin guanine dinucleotide (Mo-MGD) cofactor. The protein is Molybdenum cofactor guanylyltransferase of Vibrio campbellii (strain ATCC BAA-1116).